A 698-amino-acid polypeptide reads, in one-letter code: Elongation factor G (698 aa).

The region spanning 10–285 is the tr-type G domain; it reads DKTRNIGIMA…GVVDYLPSPL (276 aa). GTP-binding positions include 19-26, 83-87, and 137-140; these read AHIDAGKT, DTPGH, and NKMD.

It belongs to the TRAFAC class translation factor GTPase superfamily. Classic translation factor GTPase family. EF-G/EF-2 subfamily.

It is found in the cytoplasm. In terms of biological role, catalyzes the GTP-dependent ribosomal translocation step during translation elongation. During this step, the ribosome changes from the pre-translocational (PRE) to the post-translocational (POST) state as the newly formed A-site-bound peptidyl-tRNA and P-site-bound deacylated tRNA move to the P and E sites, respectively. Catalyzes the coordinated movement of the two tRNA molecules, the mRNA and conformational changes in the ribosome. In Lactobacillus johnsonii (strain CNCM I-12250 / La1 / NCC 533), this protein is Elongation factor G.